The sequence spans 314 residues: Fructose-1,6-bisphosphatase class 1 (314 aa).

Mg(2+) contacts are provided by Glu-91, Asp-112, Leu-114, and Asp-115. Substrate-binding positions include 115–118 (DGSS), Tyr-223, and Lys-254. Residue Glu-260 coordinates Mg(2+).

This sequence belongs to the FBPase class 1 family. Homotetramer. The cofactor is Mg(2+).

It is found in the cytoplasm. The catalysed reaction is beta-D-fructose 1,6-bisphosphate + H2O = beta-D-fructose 6-phosphate + phosphate. The protein operates within carbohydrate biosynthesis; gluconeogenesis. In Geobacter metallireducens (strain ATCC 53774 / DSM 7210 / GS-15), this protein is Fructose-1,6-bisphosphatase class 1.